The following is a 278-amino-acid chain: Sulfur carrier protein FdhD (278 aa).

Cysteine 121 functions as the Cysteine persulfide intermediate in the catalytic mechanism. Position 260-265 (260-265 (FCKPGR)) interacts with Mo-bis(molybdopterin guanine dinucleotide).

The protein belongs to the FdhD family.

The protein resides in the cytoplasm. In terms of biological role, required for formate dehydrogenase (FDH) activity. Acts as a sulfur carrier protein that transfers sulfur from IscS to the molybdenum cofactor prior to its insertion into FDH. In Salmonella choleraesuis (strain SC-B67), this protein is Sulfur carrier protein FdhD.